We begin with the raw amino-acid sequence, 537 residues long: 5,6-dihydroxyindole-2-carboxylic acid oxidase (537 aa).

The N-terminal stretch at 1-24 (MKSYNVLPLAYISLFLMLFYQVWA) is a signal peptide. Topologically, residues 25–477 (QFPRECANIE…WPGQEFTVSE (453 aa)) are lumenal, melanosome. 5 disulfide bridges follow: Cys-30–Cys-41, Cys-42–Cys-65, Cys-56–Cys-99, Cys-101–Cys-110, and Cys-113–Cys-122. N-linked (GlcNAc...) asparagine glycans are attached at residues Asn-96 and Asn-104. N-linked (GlcNAc...) asparagine glycosylation occurs at Asn-181. Positions 192, 215, and 224 each coordinate Zn(2+). 2 cysteine pairs are disulfide-bonded: Cys-258–Cys-261 and Cys-290–Cys-303. Residues Asn-304 and Asn-350 are each glycosylated (N-linked (GlcNAc...) asparagine). The Zn(2+) site is built by His-377 and His-381. Asn-385 carries an N-linked (GlcNAc...) asparagine glycan. His-404 provides a ligand contact to Zn(2+). The helical transmembrane segment at 478–501 (IITIAVVAALLLVAAIFGVASCLI) threads the bilayer. Residues 502 to 537 (RSRSTKNEANQPLLTDHYQRYAEDYEELPNPNHSMV) are Cytoplasmic-facing.

It belongs to the tyrosinase family. In terms of assembly, monomer. Interacts with ATP7A. Interacts with SLC45A2. Cu(2+) serves as cofactor. The cofactor is Zn(2+). In terms of processing, glycosylated. As to expression, pigment cells.

It is found in the melanosome membrane. The catalysed reaction is 2 5,6-dihydroxyindole-2-carboxylate + O2 = 2 indole-5,6-quinone-2-carboxylate + 2 H2O. Its pathway is pigment biosynthesis; melanin biosynthesis. Functionally, plays a role in melanin biosynthesis. Catalyzes the oxidation of 5,6-dihydroxyindole-2-carboxylic acid (DHICA) into indole-5,6-quinone-2-carboxylic acid. May regulate or influence the type of melanin synthesized. Also to a lower extent, capable of hydroxylating tyrosine and producing melanin. This Mus musculus (Mouse) protein is 5,6-dihydroxyindole-2-carboxylic acid oxidase (Tyrp1).